Here is a 232-residue protein sequence, read N- to C-terminus: MENQPKLNSSKEVIAFLAERFPHCFSAEGEARPLKIGIFQDLVDRVAGEMSLSKTQLRSALRLYTSSWRYLYGVKPGATRVDLDGNPCGELDEQHVEHARKQLEEAKARVQAQRAEQQAKKREAAAAAGEKEDAPRRERKPRPTTPRRKEGAERKPRAQKPVEKAPKTVKAPREEQHTPVSDISALTVGQALKVKAGQNAMDATVLEITKDGVRVQLNSGMSLIVRAEHLVF.

The disordered stretch occupies residues 105–182; that stretch reads EAKARVQAQR…REEQHTPVSD (78 aa). A compositionally biased stretch (basic and acidic residues) spans 117 to 136; sequence QQAKKREAAAAAGEKEDAPR. Basic residues predominate over residues 137–146; the sequence is RERKPRPTTP. The segment covering 147–177 has biased composition (basic and acidic residues); that stretch reads RRKEGAERKPRAQKPVEKAPKTVKAPREEQH.

It belongs to the ProQ family.

It is found in the cytoplasm. Its function is as follows. RNA chaperone with significant RNA binding, RNA strand exchange and RNA duplexing activities. May regulate ProP activity through an RNA-based, post-transcriptional mechanism. The chain is RNA chaperone ProQ from Shigella flexneri serotype 5b (strain 8401).